Reading from the N-terminus, the 176-residue chain is RNA pyrophosphohydrolase (176 aa).

Residues 6-149 (GYRPNVGIVI…KRDVYRRVMK (144 aa)) form the Nudix hydrolase domain. The short motif at 38-59 (GGINPGESAEQAMYRELFEEVG) is the Nudix box element.

Belongs to the Nudix hydrolase family. RppH subfamily. It depends on a divalent metal cation as a cofactor.

Its function is as follows. Accelerates the degradation of transcripts by removing pyrophosphate from the 5'-end of triphosphorylated RNA, leading to a more labile monophosphorylated state that can stimulate subsequent ribonuclease cleavage. The protein is RNA pyrophosphohydrolase of Shigella boydii serotype 4 (strain Sb227).